We begin with the raw amino-acid sequence, 243 residues long: Voltage-gated monoatomic cation channel TMEM109 (243 aa).

Residues 1–33 form the signal peptide; that stretch reads MAGAHSNPSWSRHLFKAVLMVLGALLLVHSASA. The Lumenal segment spans residues 34 to 83; it reads QTHREFASPGQQKRESSADILTEIGRSLKETLDTWLGPETMHVISETLLQ. The chain crosses the membrane as a helical span at residues 84-104; it reads VMWAISSAISVACFALSGIAA. Residues 105-135 lie on the Cytoplasmic side of the membrane; it reads QLLSALGLDGEQLTQVLKLSPSQVQTLLLWG. A helical membrane pass occupies residues 136–156; that stretch reads AAALVIYWLLSLLLGLVLALL. At 157 to 185 the chain is on the lumenal side; it reads GRILGGLKLVLFVAGFVGLVRSVPDPSTR. A helical transmembrane segment spans residues 186–205; the sequence is ALLLLALLTVFALLSRLTGS. Residues 206 to 243 are Cytoplasmic-facing; it reads RSSGTHLEAKVRGLERQIEELRGRQRRAAKIPRSMEEE.

In terms of assembly, homooligomer. Interacts with CRYAB; in the cellular response to DNA damage.

The protein resides in the nucleus outer membrane. The protein localises to the endoplasmic reticulum membrane. It localises to the sarcoplasmic reticulum membrane. It catalyses the reaction K(+)(in) = K(+)(out). The enzyme catalyses Ca(2+)(in) = Ca(2+)(out). Functionally, functions as a voltage-gated monoatomic cation channel permeable to both potassium and calcium. Plays a role in the cellular response to DNA damage. The chain is Voltage-gated monoatomic cation channel TMEM109 from Rattus norvegicus (Rat).